We begin with the raw amino-acid sequence, 248 residues long: Isopentenyl phosphate kinase (248 aa).

7–11 serves as a coordination point for ATP; it reads KLGGS. Residue G49 participates in substrate binding. ATP is bound at residue G50. H54 and G152 together coordinate substrate. 2 residues coordinate ATP: G209 and K213.

Belongs to the isopentenyl phosphate kinase family. Homodimer.

It catalyses the reaction isopentenyl phosphate + ATP = isopentenyl diphosphate + ADP. Catalyzes the phosphorylation of isopentenyl phosphate (IP) to isopentenyl diphosphate (IPP). Functions in an alternate mevalonate (MVA) pathway leading to IPP, a key precursor for the biosynthesis of isoprenoid compounds such as archaeal membrane lipids. The chain is Isopentenyl phosphate kinase from Haloferax volcanii (strain ATCC 29605 / DSM 3757 / JCM 8879 / NBRC 14742 / NCIMB 2012 / VKM B-1768 / DS2) (Halobacterium volcanii).